The following is a 1462-amino-acid chain: NK-tumor recognition protein (1462 aa).

One can recognise a PPIase cyclophilin-type domain in the interval 10–175 (HFDIEINREP…ADVRVIDCGV (166 aa)). 2 disordered regions span residues 187–591 (KKRK…TMAQ) and 607–627 (VIPL…KPWK). Residues 198 to 213 (SDSSSNSSSSSESSSE) show a composition bias toward low complexity. Positions 221-240 (SRRRKHKRRPKVKRSKKRRK) are enriched in basic residues. Composition is skewed to basic and acidic residues over residues 241 to 250 (EASSSEEPRN) and 258 to 286 (GHSE…RPEE). K323 is covalently cross-linked (Glycyl lysine isopeptide (Lys-Gly) (interchain with G-Cter in SUMO2)). The span at 329–345 (SGRKIKGRGTIRYHTPP) shows a compositional bias: basic residues. A phosphoserine mark is found at S379, S401, and S416. The span at 382-402 (KWSKGDKLSDPCSSRWDERSL) shows a compositional bias: basic and acidic residues. A compositionally biased stretch (polar residues) spans 403–421 (SQRSRSWSYNGYYSDLSTA). Positions 423–459 (HSGHHKKRRKEKKVKHKKKGKKQKHCRRHKQTKKRRI) are enriched in basic residues. A phosphoserine mark is found at S463 and S471. A compositionally biased stretch (basic and acidic residues) spans 497-507 (KRDWSKSDKDV). The span at 524-542 (HSQSYSRGSSRSRTASKSS) shows a compositional bias: low complexity. Positions 543–568 (SHSRSRSKSRSSSKSGHRKRASKSPR) are enriched in basic residues. Residues K578 and K581 each participate in a glycyl lysine isopeptide (Lys-Gly) (interchain with G-Cter in SUMO2) cross-link. Position 613 is a phosphoserine (S613). Residue K639 forms a Glycyl lysine isopeptide (Lys-Gly) (interchain with G-Cter in SUMO2) linkage. Residue S648 is modified to Phosphoserine. Glycyl lysine isopeptide (Lys-Gly) (interchain with G-Cter in SUMO2) cross-links involve residues K656 and K666. The segment at 658–1072 (TGSSSSYHKR…EEDLSGKHDT (415 aa)) is disordered. Low complexity-rich tracts occupy residues 699–725 (SRSY…PSSR) and 736–749 (SQCS…SISS). Positions 754–774 (RAKRRLRSSGKKNSVSHKKHS) are enriched in basic residues. Residues 775 to 800 (SSSEKTLHSKYVKGRDRSSCVRKYSE) are compositionally biased toward basic and acidic residues. Residues 801 to 815 (SRSSLDYSSDSEQSS) are compositionally biased toward low complexity. 2 stretches are compositionally biased toward basic and acidic residues: residues 823–870 (QEKE…DHLR) and 885–909 (WDSE…SSDK). Phosphoserine occurs at positions 866, 887, 889, 891, and 907. Acidic residues predominate over residues 910 to 922 (EEGEATSDSESEV). The segment covering 932 to 969 (TTKSSTNTSLPDDNGAWKSSKQRTSTSDSEGSCSNSEN) has biased composition (polar residues). Residues 988-1013 (EHTKKVKEKLKGKKDKKHKAPKRKQA) are compositionally biased toward basic residues. Residues 1022 to 1031 (FGEEEEEEID) are compositionally biased toward acidic residues. Residues 1032–1072 (DKQVTQESKEKKVSENNETIKDNILKTEKSSEEDLSGKHDT) are compositionally biased toward basic and acidic residues. K1057 is covalently cross-linked (Glycyl lysine isopeptide (Lys-Gly) (interchain with G-Cter in SUMO2)). 2 positions are modified to phosphoserine: S1077 and S1146. A disordered region spans residues 1129–1156 (MEICTPDRSSPAKVEETSPLGNARLDTP). At T1155 the chain carries Phosphothreonine. Residue K1163 forms a Glycyl lysine isopeptide (Lys-Gly) (interchain with G-Cter in SUMO2) linkage. Positions 1169–1215 (EHPQAEVVKQESSMSESKVLGEVGKQDSSSASLASAGESTGKKEVAE) are disordered. Residue K1177 forms a Glycyl lysine isopeptide (Lys-Gly) (interchain with G-Cter in SUMO1); alternate linkage. K1177 is covalently cross-linked (Glycyl lysine isopeptide (Lys-Gly) (interchain with G-Cter in SUMO2); alternate). The residue at position 1203 (S1203) is a Phosphoserine. Glycyl lysine isopeptide (Lys-Gly) (interchain with G-Cter in SUMO2) cross-links involve residues K1216, K1225, and K1258. Positions 1251–1462 (LTTVPEMKPQ…RSPSESSRYS (212 aa)) are disordered. The segment at 1311–1348 (SRSPSRSRSKSETKSRHRTRSVSYSHSRSRSRSSTSSY) is arg/Ser tandem repeat-rich. Low complexity-rich tracts occupy residues 1331 to 1351 (SVSY…YRSR) and 1359 to 1376 (RGWY…SYRS). The span at 1377–1388 (YKSHRTSSRSRS) shows a compositional bias: basic residues. The span at 1389 to 1410 (RSSSYDPHSRSRSYTYDSYYSR) shows a compositional bias: low complexity. Over residues 1425 to 1435 (RGRSYNRRSRS) the composition is skewed to basic residues.

The protein resides in the cell membrane. The enzyme catalyses [protein]-peptidylproline (omega=180) = [protein]-peptidylproline (omega=0). With respect to regulation, inhibited by cyclosporin A (CsA). Functionally, PPIase that catalyzes the cis-trans isomerization of proline imidic peptide bonds in oligopeptides and may therefore assist protein folding. Component of a putative tumor-recognition complex involved in the function of NK cells. This chain is NK-tumor recognition protein, found in Homo sapiens (Human).